Here is a 344-residue protein sequence, read N- to C-terminus: Proline-rich transmembrane protein 2 (344 aa).

Disordered stretches follow at residues Met-1 to Pro-220 and Gly-233 to Gly-265. The Cytoplasmic portion of the chain corresponds to Met-1 to Tyr-272. Residue Ser-28 is modified to Phosphoserine. A compositionally biased stretch (low complexity) spans Pro-69–Val-82. Thr-74 and Thr-78 each carry phosphothreonine. Positions Ala-124–Asn-143 are enriched in polar residues. Positions Thr-151 to Ala-162 are enriched in pro residues. The segment covering Glu-168 to Ser-178 has biased composition (polar residues). Pro residues predominate over residues Ala-201–Lys-211. Residue Ser-242 is modified to Phosphoserine. An Omega-N-methylarginine modification is found at Arg-244. 2 positions are modified to phosphoserine: Ser-252 and Ser-253. Positions Ile-273–Ala-293 form an intramembrane region, helical. Over Tyr-294–Ser-321 the chain is Cytoplasmic. A helical membrane pass occupies residues Ile-322–Val-342. The Extracellular portion of the chain corresponds to Tyr-343–Lys-344.

This sequence belongs to the CD225/Dispanin family. As to quaternary structure, component of the outer core of AMPAR complex. AMPAR complex consists of an inner core made of 4 pore-forming GluA/GRIA proteins (GRIA1, GRIA2, GRIA3 and GRIA4) and 4 major auxiliary subunits arranged in a twofold symmetry. One of the two pairs of distinct binding sites is occupied either by CNIH2, CNIH3 or CACNG2, CACNG3. The other harbors CACNG2, CACNG3, CACNG4, CACNG8 or GSG1L. This inner core of AMPAR complex is complemented by outer core constituents binding directly to the GluA/GRIA proteins at sites distinct from the interaction sites of the inner core constituents. Outer core constituents include at least PRRT1, PRRT2, CKAMP44/SHISA9, FRRS1L and NRN1. The proteins of the inner and outer core serve as a platform for other, more peripherally associated AMPAR constituents. Alone or in combination, these auxiliary subunits control the gating and pharmacology of the AMPAR complex and profoundly impact their biogenesis and protein processing. Interacts with intersectin 1/ITSN1. Interacts with SNARE complex components, including SNAP25, STX1A, SYT1 and SYT2; this interaction may inhibit SNARE complex formation. In terms of tissue distribution, neuron-specific expression throughout the brain, including hippocampus (at protein level).

The protein localises to the cell membrane. It localises to the presynaptic cell membrane. It is found in the synapse. The protein resides in the cell projection. Its subcellular location is the axon. The protein localises to the cytoplasmic vesicle. It localises to the secretory vesicle. It is found in the synaptic vesicle membrane. The protein resides in the postsynaptic density membrane. Its subcellular location is the dendritic spine. Its function is as follows. As a component of the outer core of AMPAR complex, may be involved in synaptic transmission in the central nervous system. In hippocampal neurons, in presynaptic terminals, plays an important role in the final steps of neurotransmitter release, possibly by regulating Ca(2+)-sensing. In the cerebellum, may inhibit SNARE complex formation and down-regulate short-term facilitation. The protein is Proline-rich transmembrane protein 2 (Prrt2) of Rattus norvegicus (Rat).